We begin with the raw amino-acid sequence, 290 residues long: NAD kinase (290 aa).

Catalysis depends on Asp-73, which acts as the Proton acceptor. Residues 73–74, 147–148, Arg-158, Arg-175, Asp-177, 188–193, and Gln-246 contribute to the NAD(+) site; these read DG, ND, and TAYALS.

The protein belongs to the NAD kinase family. Requires a divalent metal cation as cofactor.

It is found in the cytoplasm. The enzyme catalyses NAD(+) + ATP = ADP + NADP(+) + H(+). Functionally, involved in the regulation of the intracellular balance of NAD and NADP, and is a key enzyme in the biosynthesis of NADP. Catalyzes specifically the phosphorylation on 2'-hydroxyl of the adenosine moiety of NAD to yield NADP. In Thiobacillus denitrificans (strain ATCC 25259 / T1), this protein is NAD kinase.